Here is a 91-residue protein sequence, read N- to C-terminus: Large ribosomal subunit protein uL23c (91 aa).

This sequence belongs to the universal ribosomal protein uL23 family. Part of the 50S ribosomal subunit.

The protein resides in the plastid. Its subcellular location is the chloroplast. In terms of biological role, binds to 23S rRNA. This Pinus thunbergii (Japanese black pine) protein is Large ribosomal subunit protein uL23c (rpl23).